The sequence spans 490 residues: Protein nucleotidyltransferase YdiU (490 aa).

Residues Gly-94, Gly-96, Arg-97, Lys-117, Asp-129, Gly-130, Arg-180, and Arg-187 each contribute to the ATP site. The active-site Proton acceptor is the Asp-256. Mg(2+) contacts are provided by Asn-257 and Asp-266. Asp-266 is an ATP binding site.

It belongs to the SELO family. The cofactor is Mg(2+). Mn(2+) serves as cofactor.

It catalyses the reaction L-seryl-[protein] + ATP = 3-O-(5'-adenylyl)-L-seryl-[protein] + diphosphate. The enzyme catalyses L-threonyl-[protein] + ATP = 3-O-(5'-adenylyl)-L-threonyl-[protein] + diphosphate. It carries out the reaction L-tyrosyl-[protein] + ATP = O-(5'-adenylyl)-L-tyrosyl-[protein] + diphosphate. The catalysed reaction is L-histidyl-[protein] + UTP = N(tele)-(5'-uridylyl)-L-histidyl-[protein] + diphosphate. It catalyses the reaction L-seryl-[protein] + UTP = O-(5'-uridylyl)-L-seryl-[protein] + diphosphate. The enzyme catalyses L-tyrosyl-[protein] + UTP = O-(5'-uridylyl)-L-tyrosyl-[protein] + diphosphate. Functionally, nucleotidyltransferase involved in the post-translational modification of proteins. It can catalyze the addition of adenosine monophosphate (AMP) or uridine monophosphate (UMP) to a protein, resulting in modifications known as AMPylation and UMPylation. The chain is Protein nucleotidyltransferase YdiU from Clostridium perfringens (strain SM101 / Type A).